A 312-amino-acid polypeptide reads, in one-letter code: Olfactory receptor 1500 (312 aa).

Topologically, residues 1–25 (MTGNNQTLILEFLLLGLPIPSEYHL) are extracellular. Asn-5 is a glycosylation site (N-linked (GlcNAc...) asparagine). A helical transmembrane segment spans residues 26–49 (LFYALFLAMYLTIILGNLLIIVLV). At 50–57 (RLDSHLHM) the chain is on the cytoplasmic side. The chain crosses the membrane as a helical span at residues 58-79 (PMYLFLSNLSFSDLCFSSVTMP). Residues 80–100 (KLLQNMQSQVPSISYTGCLTQ) are Extracellular-facing. Cys-97 and Cys-189 are disulfide-bonded. A helical membrane pass occupies residues 101–120 (LYFFMVFGDMESFLLVVMAY). Topologically, residues 121–139 (DRYVAICFPLRYTTIMSTK) are cytoplasmic. A helical transmembrane segment spans residues 140–158 (FCASLVLLLWMLTMTHALL). Residues 159–196 (HTLLIARLSFCEKNVILHFFCDISALLKLSCSDIYVNE) are Extracellular-facing. The chain crosses the membrane as a helical span at residues 197–219 (LMIYILGGLIIIIPFLLIVMSYV). The Cytoplasmic segment spans residues 220 to 236 (RIFFSILKFPSIQDIYK). Residues 237–260 (VFSTCGSHLSVVTLFYGTIFGIYL) form a helical membrane-spanning segment. Residues 261-272 (CPSGNNSTVKEI) lie on the Extracellular side of the membrane. Residues 273–292 (AMAMMYTVVTPMLNPFIYSL) form a helical membrane-spanning segment. Residues 293 to 312 (RNRDMKRALIRVICTKKISL) lie on the Cytoplasmic side of the membrane.

It belongs to the G-protein coupled receptor 1 family. In terms of tissue distribution, olfactory epithelium.

The protein localises to the cell membrane. Its function is as follows. Odorant receptor. In Rattus norvegicus (Rat), this protein is Olfactory receptor 1500 (Olr1500).